Here is a 119-residue protein sequence, read N- to C-terminus: Ribonuclease P protein component (119 aa).

This sequence belongs to the RnpA family. Consists of a catalytic RNA component (M1 or rnpB) and a protein subunit.

It catalyses the reaction Endonucleolytic cleavage of RNA, removing 5'-extranucleotides from tRNA precursor.. Functionally, RNaseP catalyzes the removal of the 5'-leader sequence from pre-tRNA to produce the mature 5'-terminus. It can also cleave other RNA substrates such as 4.5S RNA. The protein component plays an auxiliary but essential role in vivo by binding to the 5'-leader sequence and broadening the substrate specificity of the ribozyme. This is Ribonuclease P protein component from Bacillus cereus (strain ZK / E33L).